The primary structure comprises 175 residues: MTMYIAFILSTIFVIGFVGFSSKPSPIYGGLGLIVSGGVGCGIVLNFGGSFLGLMVFLIYLGGMLVVFGYTTAMATEMYPEVWVSNKTVFGAFVSGLMMEFCMVYYALKEEEVEIIFKFNGLGDWVIYDTGDSGFFSEEAMGIAALYSYGTWLVIVTGWSLLIGVVVIMEITRGN.

5 helical membrane-spanning segments follow: residues 1-21, 25-45, 47-67, 88-108, and 149-169; these read MTMY…VGFS, SPIY…GIVL, FGGS…MLVV, TVFG…YYAL, and YGTW…VVIM.

This sequence belongs to the complex I subunit 6 family. As to quaternary structure, core subunit of respiratory chain NADH dehydrogenase (Complex I) which is composed of 45 different subunits.

The protein localises to the mitochondrion inner membrane. It catalyses the reaction a ubiquinone + NADH + 5 H(+)(in) = a ubiquinol + NAD(+) + 4 H(+)(out). Functionally, core subunit of the mitochondrial membrane respiratory chain NADH dehydrogenase (Complex I) which catalyzes electron transfer from NADH through the respiratory chain, using ubiquinone as an electron acceptor. Essential for the catalytic activity and assembly of complex I. The protein is NADH-ubiquinone oxidoreductase chain 6 (MT-ND6) of Sus scrofa (Pig).